A 466-amino-acid polypeptide reads, in one-letter code: Glutamate decarboxylase (466 aa).

N6-(pyridoxal phosphate)lysine is present on lysine 277.

Belongs to the group II decarboxylase family. Pyridoxal 5'-phosphate is required as a cofactor.

The catalysed reaction is L-glutamate + H(+) = 4-aminobutanoate + CO2. Functionally, converts internalized glutamate to GABA and increases the internal pH. Involved in glutamate-dependent acid resistance. In Lactococcus lactis subsp. lactis (strain IL1403) (Streptococcus lactis), this protein is Glutamate decarboxylase (gadB).